Reading from the N-terminus, the 114-residue chain is Mediator of RNA polymerase II transcription subunit 11 (114 aa).

A coiled-coil region spans residues L28 to Q61.

This sequence belongs to the Mediator complex subunit 11 family. In terms of assembly, component of the Mediator complex. Ubiquitously expressed at early stage of development. After fertilization expressed in head region as well as in lateral line primordium.

It is found in the nucleus. Component of the Mediator complex, a coactivator involved in the regulated transcription of nearly all RNA polymerase II-dependent genes. Mediator functions as a bridge to convey information from gene-specific regulatory proteins to the basal RNA polymerase II transcription machinery. Mediator is recruited to promoters by direct interactions with regulatory proteins and serves as a scaffold for the assembly of a functional pre-initiation complex with RNA polymerase II and the general transcription factors. The sequence is that of Mediator of RNA polymerase II transcription subunit 11 (med11) from Danio rerio (Zebrafish).